The sequence spans 725 residues: Eukaryotic translation initiation factor 3 subunit B (725 aa).

A Phosphoserine modification is found at S23. The 91-residue stretch at 39–129 (TVVVIEGAPV…HTFVVRKLNQ (91 aa)) folds into the RRM domain. Residue S135 is modified to Phosphoserine. T136 carries the phosphothreonine modification. 3 WD repeats span residues 190-229 (DRENWTETYVQWSPMGTYLVSLHLRGIQLWGGESWGMCAR), 304-344 (DGKK…LVDK), and 347-386 (IKIDGVQNFEWCPVSDALGRDSKEQLLAYWTPEITNQPAR). Residues 630–671 (LTKEDMKKIRKKLKDYNRLFDEEDIAEQSSANRELAARRRQL) are a coiled coil.

The protein belongs to the eIF-3 subunit B family. Component of the eukaryotic translation initiation factor 3 (eIF-3) complex. The eIF-3 complex appears to include tif32/eif3a, SPAC25G10.08/eif3b, tif33/eif3c, SPBC4C3.07/eif3f, tif35/eif3g and sum1/eif3i. This set of common subunits may also associate exclusively with either moe1/eif3d and int6/eif3e, or with SPAC821.05/eif3h and SPAC1751.03/eif3m. The eIF-3 complex may also include SPAC3A12.13c/eif3j.

It localises to the cytoplasm. RNA-binding component of the eukaryotic translation initiation factor 3 (eIF-3) complex, which is involved in protein synthesis of a specialized repertoire of mRNAs and, together with other initiation factors, stimulates binding of mRNA and methionyl-tRNAi to the 40S ribosome. The eIF-3 complex specifically targets and initiates translation of a subset of mRNAs involved in cell proliferation. This is Eukaryotic translation initiation factor 3 subunit B from Schizosaccharomyces pombe (strain 972 / ATCC 24843) (Fission yeast).